The chain runs to 301 residues: ATP synthase gamma chain (301 aa).

This sequence belongs to the ATPase gamma chain family. As to quaternary structure, F-type ATPases have 2 components, CF(1) - the catalytic core - and CF(0) - the membrane proton channel. CF(1) has five subunits: alpha(3), beta(3), gamma(1), delta(1), epsilon(1). CF(0) has three main subunits: a, b and c.

The protein resides in the cell inner membrane. Functionally, produces ATP from ADP in the presence of a proton gradient across the membrane. The gamma chain is believed to be important in regulating ATPase activity and the flow of protons through the CF(0) complex. This is ATP synthase gamma chain from Bordetella parapertussis (strain 12822 / ATCC BAA-587 / NCTC 13253).